Here is a 178-residue protein sequence, read N- to C-terminus: MKINEFIVVEGRDDTERVKRAVECDTIETNGSAINEQTLEVIRNAQQSRGVIVLTDPDFPGDKIRSTITEHVKGVKHAYIDREKAKNKKGKIGVEHADLIDIKEALMHVSSPFDEAYESIDKSVLIELGLIVGKDARRRREILSRKLRIGHSNGKQLLKKLNAFGYTEADVRQALEDE.

One can recognise a Toprim domain in the interval 4–100; the sequence is NEFIVVEGRD…KIGVEHADLI (97 aa). Mg(2+) contacts are provided by Glu10, Asp56, and Asp58.

Belongs to the ribonuclease M5 family. Requires Mg(2+) as cofactor.

It localises to the cytoplasm. It carries out the reaction Endonucleolytic cleavage of RNA, removing 21 and 42 nucleotides, respectively, from the 5'- and 3'-termini of a 5S-rRNA precursor.. Functionally, required for correct processing of both the 5' and 3' ends of 5S rRNA precursor. Cleaves both sides of a double-stranded region yielding mature 5S rRNA in one step. The chain is Ribonuclease M5 from Staphylococcus aureus (strain NCTC 8325 / PS 47).